A 273-amino-acid chain; its full sequence is Large ribosomal subunit protein uL2 (273 aa).

Positions 221-263 (RGTAMNPVDHPHGGGEGRNFGKHPVSPWGLKTKGKKTRRNKRT) are disordered. Basic residues predominate over residues 252-263 (TKGKKTRRNKRT).

The protein belongs to the universal ribosomal protein uL2 family. Part of the 50S ribosomal subunit. Forms a bridge to the 30S subunit in the 70S ribosome.

Functionally, one of the primary rRNA binding proteins. Required for association of the 30S and 50S subunits to form the 70S ribosome, for tRNA binding and peptide bond formation. It has been suggested to have peptidyltransferase activity; this is somewhat controversial. Makes several contacts with the 16S rRNA in the 70S ribosome. This Buchnera aphidicola subsp. Cinara cedri (strain Cc) protein is Large ribosomal subunit protein uL2.